Here is a 273-residue protein sequence, read N- to C-terminus: 4-hydroxy-tetrahydrodipicolinate reductase (273 aa).

Residues 12-17 (GAGGRM) and E38 each bind NAD(+). R39 lines the NADP(+) pocket. NAD(+)-binding positions include 102–104 (GTT) and 126–129 (AANF). Catalysis depends on H159, which acts as the Proton donor/acceptor. (S)-2,3,4,5-tetrahydrodipicolinate is bound at residue H160. K163 serves as the catalytic Proton donor. 169–170 (GT) is a binding site for (S)-2,3,4,5-tetrahydrodipicolinate.

The protein belongs to the DapB family. As to quaternary structure, homotetramer.

Its subcellular location is the cytoplasm. It carries out the reaction (S)-2,3,4,5-tetrahydrodipicolinate + NAD(+) + H2O = (2S,4S)-4-hydroxy-2,3,4,5-tetrahydrodipicolinate + NADH + H(+). The catalysed reaction is (S)-2,3,4,5-tetrahydrodipicolinate + NADP(+) + H2O = (2S,4S)-4-hydroxy-2,3,4,5-tetrahydrodipicolinate + NADPH + H(+). The protein operates within amino-acid biosynthesis; L-lysine biosynthesis via DAP pathway; (S)-tetrahydrodipicolinate from L-aspartate: step 4/4. Its function is as follows. Catalyzes the conversion of 4-hydroxy-tetrahydrodipicolinate (HTPA) to tetrahydrodipicolinate. This Pectobacterium atrosepticum (strain SCRI 1043 / ATCC BAA-672) (Erwinia carotovora subsp. atroseptica) protein is 4-hydroxy-tetrahydrodipicolinate reductase.